The primary structure comprises 262 residues: Apolipoprotein A-I (262 aa).

The first 18 residues, 1–18, serve as a signal peptide directing secretion; sequence MKFLALALTILLAAATQA. The 3 X approximate tandem repeats stretch occupies residues 32 to 63; sequence VKVAMMEYMAQVKETGQRSIDLLDDTEFKEYK. Tandem repeats lie at residues 64–85 and 87–107. A 10 X approximate tandem repeats region spans residues 64 to 262; that stretch reads VQLSQSLDNL…YETISQAMKA (199 aa). One copy of the 3; half-length repeat lies at 108–118; the sequence is KDVEDVRTQLE. 5 repeat units span residues 119-140, 141-162, 163-184, 185-206, and 207-228. The 9; half-length repeat unit spans residues 229-239; it reads PLTNDFKGQVG. Repeat unit 10 spans residues 240–262; that stretch reads PAAEQAKEKLMDFYETISQAMKA.

Belongs to the apolipoprotein A1/A4/E family.

Its subcellular location is the secreted. Its function is as follows. Participates in the reverse transport of cholesterol from tissues to the liver for excretion by promoting cholesterol efflux from tissues and by acting as a cofactor for the lecithin cholesterol acyltransferase (LCAT). In Salmo trutta (Brown trout), this protein is Apolipoprotein A-I (apoa1).